A 108-amino-acid polypeptide reads, in one-letter code: UPF0060 membrane protein YnfA (108 aa).

Residues 1–5 are Periplasmic-facing; sequence MFKTT. Residues 6–26 form a helical membrane-spanning segment; sequence LLFFITALCEIIGCFLPWLWL. The Cytoplasmic segment spans residues 27 to 30; that stretch reads KRNG. The chain crosses the membrane as a helical span at residues 31 to 51; it reads SIWLLLPAGVSLAFFVWLLTL. At 52–60 the chain is on the periplasmic side; that stretch reads HPAASGRVY. Residues 61–81 traverse the membrane as a helical segment; the sequence is AAYGGVYVCTALLWLRFIDGV. Over 82–84 the chain is Cytoplasmic; it reads KLS. The chain crosses the membrane as a helical span at residues 85-105; that stretch reads LYDWSGALIALCGMLIIVAGW. Topologically, residues 106 to 108 are periplasmic; sequence GRA.

Belongs to the UPF0060 family.

Its subcellular location is the cell inner membrane. The polypeptide is UPF0060 membrane protein YnfA (Escherichia fergusonii (strain ATCC 35469 / DSM 13698 / CCUG 18766 / IAM 14443 / JCM 21226 / LMG 7866 / NBRC 102419 / NCTC 12128 / CDC 0568-73)).